A 370-amino-acid chain; its full sequence is Protein PAM71, chloroplastic (370 aa).

The disordered stretch occupies residues 1 to 38 (MLSLNLSESLRIPFQNPRPPKSDFSSTSSSPSSSSRRC). The transit peptide at 1 to 73 (MLSLNLSESL…RNESQQLGFR (73 aa)) directs the protein to the chloroplast. The segment covering 22–38 (SDFSSTSSSPSSSSRRC) has biased composition (low complexity). Over 74–113 (CFQRNDAACYLEKAESEEHDRNLDVLVESSIAHSRREIQR) the chain is Stromal. A helical membrane pass occupies residues 114 to 134 (VLMFLAVSGSVALLGTDPAFA). The Lumenal, thylakoid segment spans residues 135 to 161 (ASSIPNVTQSLVTSFGDLGDISSGFAS). The chain crosses the membrane as a helical span at residues 162 to 182 (AFLLIFFSELGDKTFFIAALL). The Stromal portion of the chain corresponds to 183–188 (AARNSA). The helical transmembrane segment at 189–209 (ATVFVGTFGALGIMTIISVVL) threads the bilayer. At 210 to 228 (GRTFHYVDEVLPFRFGGTD) the chain is on the lumenal, thylakoid side. A helical transmembrane segment spans residues 229–249 (LPIDDIAAVCLLVYFGVSTLL). The Stromal portion of the chain corresponds to 250–275 (DAVSDEGKADEEQKEAELAVSELSGN). Residues 276-296 (GAGIVAAANTIISTFALVFVA) traverse the membrane as a helical segment. The Lumenal, thylakoid segment spans residues 297–315 (EWGDKSFFSTIALAAASSP). The helical transmembrane segment at 316 to 336 (LGVIAGALAGHGAATLLAVLG) threads the bilayer. At 337–348 (GSLLGNFLSEKA) the chain is on the stromal side. The chain crosses the membrane as a helical span at residues 349–369 (IAYVGGVLFLVFAAVTVAEIV). Thr-370 is a topological domain (lumenal, thylakoid).

This sequence belongs to the GDT1 family. In terms of assembly, homodimer.

Its subcellular location is the plastid. It is found in the chloroplast membrane. It localises to the thylakoid. Mn(2+)/H(+) exchanger, which transport Mn(2+)from the chloroplast stroma into the acidic thylakoid lumen. Might be a chloroplast-localized Ca(2+)/H(+) antiporter. Regulates Ca(2+), Mn(2+) and pH homeostasis. Required for chloroplast development. The protein is Protein PAM71, chloroplastic of Arabidopsis thaliana (Mouse-ear cress).